Here is an 845-residue protein sequence, read N- to C-terminus: Nuclear pore complex protein Nup107 (845 aa).

Disordered stretches follow at residues M1–Q26 and Q677–E702. 2 stretches are compositionally biased toward polar residues: residues P7 to Q26 and T685 to N694.

Belongs to the nucleoporin Nup84/Nup107 family. In terms of assembly, part of the nuclear pore complex (NPC). As to expression, expressed in spermatocytes (at protein level).

The protein resides in the nucleus. It localises to the nuclear pore complex. It is found in the nucleus envelope. The protein localises to the nucleus membrane. Its subcellular location is the cytoplasm. The protein resides in the cytoskeleton. It localises to the spindle. It is found in the chromosome. The protein localises to the nucleus matrix. Its function is as follows. Plays a role in nuclear pore complex (NPC) assembly and maintenance. Required for nuclear import of Mad. Mediates the association between the nuclear pore complex and a subset of active chromatin regions adjacent to lamin-associated domains. Plays a role in double strand break repair by relocalizing the heterochromatic double strand breaks (DSBs) to the nuclear periphery as part of the homologous recombination (HR) repair process. Regulates cytokinesis during spermatocyte meiosis by maintaining type-B lamin Lam localization to the spindle envelope. Regulates female gonad development and oogenesis. The chain is Nuclear pore complex protein Nup107 from Drosophila melanogaster (Fruit fly).